The sequence spans 111 residues: Parvalbumin alpha (111 aa).

Position 1 is an N-acetylthreonine; in form C2 (Thr-1). EF-hand domains are found at residues 40–75 and 79–111; these read KPDDTLKEVFGILDQDKSGYIEEEELKFVLKGFAAG and LTANETKALLKAGDQDGDDKIGVDEFTNLVKAA. 11 residues coordinate Ca(2+): Asp-53, Asp-55, Ser-57, Tyr-59, Glu-61, Glu-64, Asp-92, Asp-94, Asp-96, Lys-98, and Glu-103.

The protein belongs to the parvalbumin family. Acetylation of Thr-1 converts C1 to C2.

In muscle, parvalbumin is thought to be involved in relaxation after contraction. It binds two calcium ions. The protein is Parvalbumin alpha of Latimeria chalumnae (Coelacanth).